Here is a 108-residue protein sequence, read N- to C-terminus: uncharacterized protein (108 aa).

This is an uncharacterized protein from Saccharolobus islandicus (Sulfolobus islandicus).